Consider the following 421-residue polypeptide: D-amino acid dehydrogenase (421 aa).

3–17 (VLILGSGVIGVTSAY) is an FAD binding site.

It belongs to the DadA oxidoreductase family. Requires FAD as cofactor.

The enzyme catalyses a D-alpha-amino acid + A + H2O = a 2-oxocarboxylate + AH2 + NH4(+). In terms of biological role, oxidative deamination of D-amino acids. The sequence is that of D-amino acid dehydrogenase from Bradyrhizobium diazoefficiens (strain JCM 10833 / BCRC 13528 / IAM 13628 / NBRC 14792 / USDA 110).